The chain runs to 234 residues: (5-formylfuran-3-yl)methyl phosphate synthase (234 aa).

The active-site Schiff-base intermediate with substrate is the lysine 27. Residue lysine 85 is the Proton acceptor of the active site.

This sequence belongs to the MfnB family.

It catalyses the reaction 2 D-glyceraldehyde 3-phosphate = 4-(hydroxymethyl)-2-furancarboxaldehyde phosphate + phosphate + 2 H2O. The protein operates within cofactor biosynthesis; methanofuran biosynthesis. In terms of biological role, catalyzes the formation of 4-(hydroxymethyl)-2-furancarboxaldehyde phosphate (4-HFC-P) from two molecules of glyceraldehyde-3-P (GA-3-P). The chain is (5-formylfuran-3-yl)methyl phosphate synthase from Methanosarcina acetivorans (strain ATCC 35395 / DSM 2834 / JCM 12185 / C2A).